The sequence spans 434 residues: Tubulin gamma chain (434 aa).

135–141 (AGGTGSG) contributes to the GTP binding site.

It belongs to the tubulin family.

Its subcellular location is the cytoplasm. The protein resides in the cytoskeleton. It is found in the microtubule organizing center. It localises to the spindle pole body. Tubulin is the major constituent of microtubules. The gamma chain is found at microtubule organizing centers (MTOC) such as the spindle poles or the centrosome, suggesting that it is involved in the minus-end nucleation of microtubule assembly. The protein is Tubulin gamma chain (TUB4) of Encephalitozoon cuniculi (strain GB-M1) (Microsporidian parasite).